The following is a 192-amino-acid chain: Ubiquitin-conjugating enzyme E2 27 (192 aa).

The 149-residue stretch at 2 to 150 (IDFSRIQKEL…ARYWTETFAK (149 aa)) folds into the UBC core domain. Cys-88 serves as the catalytic Glycyl thioester intermediate. One can recognise a UBA domain in the interval 153–192 (SLEEKVKRLVEMGFGDAQVRSAIESSGGDENLALEKLCSA).

This sequence belongs to the ubiquitin-conjugating enzyme family. As to expression, expressed in seeds, pistils, siliques, hypocotyls and leaves.

It carries out the reaction S-ubiquitinyl-[E1 ubiquitin-activating enzyme]-L-cysteine + [E2 ubiquitin-conjugating enzyme]-L-cysteine = [E1 ubiquitin-activating enzyme]-L-cysteine + S-ubiquitinyl-[E2 ubiquitin-conjugating enzyme]-L-cysteine.. Its pathway is protein modification; protein ubiquitination. Accepts the ubiquitin from the E1 complex and catalyzes its covalent attachment to other proteins. This Arabidopsis thaliana (Mouse-ear cress) protein is Ubiquitin-conjugating enzyme E2 27 (UBC27).